The primary structure comprises 304 residues: Cyclin-dependent kinase 3 (304 aa).

Residues 4–286 (FQKVEKIGEG…AKTALAHPYF (283 aa)) form the Protein kinase domain. ATP is bound by residues 10–18 (IGEGTYGVV) and Lys33. Catalysis depends on Asp127, which acts as the Proton acceptor.

This sequence belongs to the protein kinase superfamily. CMGC Ser/Thr protein kinase family. CDC2/CDKX subfamily. As to quaternary structure, interacts with CABLES1 and ATF1. Binding to CCNC/cyclin-C promotes RB1 phosphorylation. Binds to CABLES2.

It carries out the reaction L-seryl-[protein] + ATP = O-phospho-L-seryl-[protein] + ADP + H(+). The enzyme catalyses L-threonyl-[protein] + ATP = O-phospho-L-threonyl-[protein] + ADP + H(+). Serine/threonine-protein kinase that plays a critical role in the control of the eukaryotic cell cycle; involved in G0-G1 and G1-S cell cycle transitions. Interacts with CCNC/cyclin-C during interphase. Phosphorylates histone H1, ATF1, RB1 and CABLES1. ATF1 phosphorylation triggers ATF1 transactivation and transcriptional activities, and promotes cell proliferation and transformation. CDK3/cyclin-C mediated RB1 phosphorylation is required for G0-G1 transition. Promotes G1-S transition probably by contributing to the activation of E2F1, E2F2 and E2F3 in a RB1-independent manner. The sequence is that of Cyclin-dependent kinase 3 (Cdk3) from Mus musculus (Mouse).